A 1065-amino-acid chain; its full sequence is MFDRQYPTVHDLYIPFPVFQSRLEQPFDTTVTSIRELRTISSQSTVYGYDLTVNDPLYYDLEPLLGNSISLTLDPKLTDSERLDAVYLDINNRLANCHGDLLRKFSATSYSIDTSVIPYVFLPMYRYLLHIMTGSAFNSLFRQMIVNVDANCANADESLLTSAQHLFALLNKINPSRQLPAPLRHILINATIADVPYDMQGKFVPYNVVFLPTSNESLRDATIARIREPAGYHPRPSIVVPHYFVFRSTTDALCRFMYLAKRTFLHVNDKTATHTSVRRCELLRLNFPLDQSFAQLSLLVQLQLPLSTLSIQRLPHLSTTVNQLITLASSSYSEQAIINLLRVNWNVIGYIELSTLGEPSLPAIRVYDFTSSMNTRSVTQGPNVQIRTRSNAIDVHVREFIRFGRYLPLEIPKCRVPRLVSLQVINYSLNHLLSVTPWPDQYDVTRHRPERIIENSVKRTIQYQEYDPSVGTWATSSDMTNYTHIPSDSYYHQFIVTCLRSFCGLRDLPRENSARYPYVVLLYGLALGHEIAPSRMGLTYAMTSHMISYVLSTITTGIDVAPSEIISRFKLFLIDVPFADTIIHDLRKVTPNVNVHSTSIFTSNERGDARILTGWVVIRIAVSRFEQQKRSFEYMSYFNDILRFCDGGIIHFDIPDATFLMHVVTSLQCTPNRRVKVLSYFASQSPFSLTLHFYRDTTDPLLPVANIGHWVTRHQMKRYAYTDRDSTIPLRHEVIPALSTVMSRMTAEYSFVCQKSDLPVCLSALSTISNYARVATWTDYRGIAHWSGSAVIDPLRLLDSSRTGVLATNVPIEPLIAPSHGVPRLERSTYRVVDAFHLCSLIGPIFIQREFNIWTASRTSERTRHVIDVGGRDGAFRGLFPHAMYTVIDPAPAPQHMISNYISEPWDFNDFQGSLDRIMDTLGIIDPQDVFLVFSHVFISALNRPAAHVNALEQLGALQCSSVVSTQTSGSSASTLYSSYVNHNPFLEIRMENAAYLTRTYPSPYPLPTRAEMNEAILNNARSRLHQTSAAEILDLAMRFGYAPSYEAIVTLPALCDQHVVYAIQ.

The protein resides in the virion. The enzyme catalyses a 5'-end diphospho-ribonucleoside in mRNA + GTP + H(+) = a 5'-end (5'-triphosphoguanosine)-ribonucleoside in mRNA + diphosphate. It carries out the reaction a 5'-end (5'-triphosphoguanosine)-ribonucleoside in mRNA + S-adenosyl-L-methionine = a 5'-end (N(7)-methyl 5'-triphosphoguanosine)-ribonucleoside in mRNA + S-adenosyl-L-homocysteine. Its function is as follows. Outer capsid protein involved in mRNA capping. Catalyzes the last 3 enzymatic activities for formation of the 5' cap structure on the viral plus-strand transcripts, namely the RNA guanylyltransferase, RNA-7N- and RNA-2'O-methyltransferase activities. This is Outer capsid protein VP3 (S3) from Cryphonectria parasitica mycoreovirus 1 (strain 9B21) (CpMYRV-1).